The chain runs to 444 residues: Acyl-CoA (8-3)-desaturase (444 aa).

Met-1 is subject to N-acetylmethionine. The Cytoplasmic portion of the chain corresponds to 1-121 (MAPDPVAAET…FRELRATVER (121 aa)). The region spanning 17–94 (PRYFTWDEVA…MNSLLIGELS (78 aa)) is the Cytochrome b5 heme-binding domain. Residues 122 to 142 (MGLMKANHVFFLLYLLHILLL) traverse the membrane as a helical segment. Residues 143 to 145 (DGA) are Lumenal-facing. The chain crosses the membrane as a helical span at residues 146-170 (AWLTLWVFGTSFLPFLLCAVLLSAV). Topologically, residues 171–267 (QAQAGWLQHD…PYNHQHKYFF (97 aa)) are cytoplasmic. Positions 179–183 (HDFGH) match the Histidine box-1 motif. The Histidine box-2 motif lies at 216-220 (HFQHH). Residues 268 to 288 (LIGPPALLPLYFQWYIFYFVI) form a helical membrane-spanning segment. Residues 289-305 (QRKKWVDLAWMITFYVR) lie on the Lumenal side of the membrane. Residues 306–326 (FFLTYVPLLGLKAFLGLFFIV) traverse the membrane as a helical segment. Residues 327 to 444 (RFLESNWFVW…QLWLDAYLHQ (118 aa)) are Cytoplasmic-facing. A Histidine box-3 motif is present at residues 382–386 (QIEHH).

This sequence belongs to the fatty acid desaturase type 1 family. In terms of tissue distribution, widely expressed, with highest levels in liver, brain, adrenal gland and heart. Highly expressed in fetal liver and brain.

Its subcellular location is the endoplasmic reticulum membrane. The protein localises to the mitochondrion. The enzyme catalyses (8Z,11Z,14Z)-eicosatrienoyl-CoA + 2 Fe(II)-[cytochrome b5] + O2 + 2 H(+) = (5Z,8Z,11Z,14Z)-eicosatetraenoyl-CoA + 2 Fe(III)-[cytochrome b5] + 2 H2O. The catalysed reaction is (8Z,11Z,14Z,17Z)-eicosatetraenoyl-CoA + 2 Fe(II)-[cytochrome b5] + O2 + 2 H(+) = (5Z,8Z,11Z,14Z,17Z)-eicosapentaenoyl-CoA + 2 Fe(III)-[cytochrome b5] + 2 H2O. It catalyses the reaction (11E)-octadecenoyl-CoA + 2 Fe(II)-[cytochrome b5] + O2 + 2 H(+) = (5Z,11E)-octadecadienoyl-CoA + 2 Fe(III)-[cytochrome b5] + 2 H2O. Its pathway is lipid metabolism; polyunsaturated fatty acid biosynthesis. Functionally, acts as a front-end fatty acyl-coenzyme A (CoA) desaturase that introduces a cis double bond at carbon 5 located between a preexisting double bond and the carboxyl end of the fatty acyl chain. Involved in biosynthesis of highly unsaturated fatty acids (HUFA) from the essential polyunsaturated fatty acids (PUFA) linoleic acid (LA) (18:2n-6) and alpha-linolenic acid (ALA) (18:3n-3) precursors. Specifically, desaturates dihomo-gamma-linoleoate (DGLA) (20:3n-6) and eicosatetraenoate (ETA) (20:4n-3) to generate arachidonate (AA) (20:4n-6) and eicosapentaenoate (EPA) (20:5n-3), respectively. As a rate limiting enzyme for DGLA (20:3n-6) and AA (20:4n-6)-derived eicosanoid biosynthesis, controls the metabolism of inflammatory lipids like prostaglandin E2, critical for efficient acute inflammatory response and maintenance of epithelium homeostasis. Contributes to membrane phospholipid biosynthesis by providing AA (20:4n-6) as a major acyl chain esterified into phospholipids. In particular, regulates phosphatidylinositol-4,5-bisphosphate levels, modulating inflammatory cytokine production in T-cells. Also desaturates (11E)-octadecenoate (trans-vaccenoate)(18:1n-9), a metabolite in the biohydrogenation pathway of LA (18:2n-6). Its function is as follows. Does not exhibit any catalytic activity toward 20:3n-6, but it may enhance FADS2 activity. The chain is Acyl-CoA (8-3)-desaturase from Homo sapiens (Human).